The primary structure comprises 270 residues: 3-methyl-2-oxobutanoate hydroxymethyltransferase (270 aa).

Mg(2+) contacts are provided by aspartate 42 and aspartate 86. 3-methyl-2-oxobutanoate contacts are provided by residues 42 to 43, aspartate 86, and lysine 116; that span reads DS. Glutamate 118 serves as a coordination point for Mg(2+). Glutamate 185 (proton acceptor) is an active-site residue.

Belongs to the PanB family. In terms of assembly, homodecamer; pentamer of dimers. It depends on Mg(2+) as a cofactor.

The protein localises to the cytoplasm. It catalyses the reaction 3-methyl-2-oxobutanoate + (6R)-5,10-methylene-5,6,7,8-tetrahydrofolate + H2O = 2-dehydropantoate + (6S)-5,6,7,8-tetrahydrofolate. It functions in the pathway cofactor biosynthesis; (R)-pantothenate biosynthesis; (R)-pantoate from 3-methyl-2-oxobutanoate: step 1/2. Functionally, catalyzes the reversible reaction in which hydroxymethyl group from 5,10-methylenetetrahydrofolate is transferred onto alpha-ketoisovalerate to form ketopantoate. The protein is 3-methyl-2-oxobutanoate hydroxymethyltransferase of Synechococcus sp. (strain CC9902).